The sequence spans 131 residues: MTDPIADYLTRLRNAINAKHRVVEVPASNLKKEITKILFEKGYILNYKFVEDGPQGTIKVALKYDSVNKVNAIKKLERISSPGMRQYTGYKDMPRVINGLGIAIISTSKGVMTNKEAAELKIGGEVLCYVY.

This sequence belongs to the universal ribosomal protein uS8 family. In terms of assembly, part of the 30S ribosomal subunit. Contacts proteins S5 and S12.

One of the primary rRNA binding proteins, it binds directly to 16S rRNA central domain where it helps coordinate assembly of the platform of the 30S subunit. In Bacteroides fragilis (strain ATCC 25285 / DSM 2151 / CCUG 4856 / JCM 11019 / LMG 10263 / NCTC 9343 / Onslow / VPI 2553 / EN-2), this protein is Small ribosomal subunit protein uS8.